The sequence spans 211 residues: Somatotropin (211 aa).

The first 23 residues, 1-23, serve as a signal peptide directing secretion; sequence MASGFLLCPVLLAVFFMSPVEVG. Histidine 40 contributes to the Zn(2+) binding site. Cysteines 73 and 184 form a disulfide. Glutamate 193 serves as a coordination point for Zn(2+). A disulfide bridge connects residues cysteine 201 and cysteine 209.

Belongs to the somatotropin/prolactin family.

The protein resides in the secreted. In terms of biological role, growth hormone plays an important role in growth control and is involved in the regulation of several anabolic processes. Implicated as an osmoregulatory substance important for seawater adaptation. This Lepisosteus osseus (Long-nosed gar) protein is Somatotropin (gh).